We begin with the raw amino-acid sequence, 360 residues long: BOLA class I histocompatibility antigen, alpha chain BL3-6 (360 aa).

An N-terminal signal peptide occupies residues 1–21 (MGPRALLLLLSGVLILTETRA). Positions 22 to 111 (GSHSLRYFST…LRGYYNQSEA (90 aa)) are alpha-1. Over 22–308 (GSHSLRYFST…QPSFLTMGII (287 aa)) the chain is Extracellular. An N-linked (GlcNAc...) asparagine glycan is attached at Asn-107. The alpha-2 stretch occupies residues 112-203 (GSHTLQWMSG…ENGKDTLLRA (92 aa)). Disulfide bonds link Cys-122-Cys-185 and Cys-224-Cys-280. An alpha-3 region spans residues 204-295 (DPPKAHVTHH…GLQEPLTLRW (92 aa)). The Ig-like C1-type domain maps to 206-292 (PKAHVTHHPI…QHEGLQEPLT (87 aa)). The tract at residues 296–308 (EPPQPSFLTMGII) is connecting peptide. A helical transmembrane segment spans residues 309-328 (VGLVLLVVTGAVVAGVVICM). Topologically, residues 329-360 (KKRSGEKGGNYIQASSSDSAQGSDVSLTVPKV) are cytoplasmic. A disordered region spans residues 340–360 (IQASSSDSAQGSDVSLTVPKV). The span at 341 to 354 (QASSSDSAQGSDVS) shows a compositional bias: low complexity. Phosphoserine is present on residues Ser-351 and Ser-354.

It belongs to the MHC class I family. In terms of assembly, heterodimer of an alpha chain and a beta chain (beta-2-microglobulin).

The protein resides in the membrane. Involved in the presentation of foreign antigens to the immune system. The sequence is that of BOLA class I histocompatibility antigen, alpha chain BL3-6 from Bos taurus (Bovine).